Reading from the N-terminus, the 391-residue chain is Probable protein phosphatase 2C 32 (391 aa).

The disordered stretch occupies residues 1–53 (MSCTVAIPSSPVFSPSRRPLSCKAASASASPESVSVAASSPAQAAPPAGSPLR). Residues 8–51 (PSSPVFSPSRRPLSCKAASASASPESVSVAASSPAQAAPPAGSP) are compositionally biased toward low complexity. A helical transmembrane segment spans residues 95 to 115 (LVVPVCGGAAAAAAAAAVAAV). Residues 129–386 (EFAVYCRRGK…DDISIVIIQL (258 aa)) enclose the PPM-type phosphatase domain. Aspartate 168, glycine 169, aspartate 332, and aspartate 377 together coordinate Mn(2+).

This sequence belongs to the PP2C family. Mg(2+) serves as cofactor. The cofactor is Mn(2+).

The protein localises to the membrane. It carries out the reaction O-phospho-L-seryl-[protein] + H2O = L-seryl-[protein] + phosphate. The enzyme catalyses O-phospho-L-threonyl-[protein] + H2O = L-threonyl-[protein] + phosphate. The chain is Probable protein phosphatase 2C 32 from Oryza sativa subsp. japonica (Rice).